Here is a 341-residue protein sequence, read N- to C-terminus: Malate dehydrogenase, mitochondrial (341 aa).

NAD(+)-binding positions include 35–41 (GAAGGIG) and Asp61. Substrate contacts are provided by Arg108 and Arg114. NAD(+)-binding positions include Asn121 and 144–146 (ITN). Residues Asn146 and Arg180 each contribute to the substrate site. The active-site Proton acceptor is His204. Met255 is an NAD(+) binding site.

The protein belongs to the LDH/MDH superfamily. MDH type 1 family. Homodimer.

It localises to the mitochondrion matrix. The catalysed reaction is (S)-malate + NAD(+) = oxaloacetate + NADH + H(+). In terms of biological role, catalyzes the reversible conversion of (S)-malate to oxaloacetate in the citric acid cycle. This Caenorhabditis elegans protein is Malate dehydrogenase, mitochondrial.